The sequence spans 188 residues: Elongation factor P (188 aa).

This sequence belongs to the elongation factor P family.

It is found in the cytoplasm. It functions in the pathway protein biosynthesis; polypeptide chain elongation. In terms of biological role, involved in peptide bond synthesis. Stimulates efficient translation and peptide-bond synthesis on native or reconstituted 70S ribosomes in vitro. Probably functions indirectly by altering the affinity of the ribosome for aminoacyl-tRNA, thus increasing their reactivity as acceptors for peptidyl transferase. The protein is Elongation factor P of Nitrosospira multiformis (strain ATCC 25196 / NCIMB 11849 / C 71).